Reading from the N-terminus, the 382-residue chain is Mannitol-1-phosphate 5-dehydrogenase (382 aa).

4-15 (AVHFGAGNIGRG) provides a ligand contact to NAD(+).

The protein belongs to the mannitol dehydrogenase family.

The catalysed reaction is D-mannitol 1-phosphate + NAD(+) = beta-D-fructose 6-phosphate + NADH + H(+). This Vibrio vulnificus (strain CMCP6) protein is Mannitol-1-phosphate 5-dehydrogenase.